A 593-amino-acid chain; its full sequence is Proline--tRNA ligase (593 aa).

This sequence belongs to the class-II aminoacyl-tRNA synthetase family. ProS type 1 subfamily. As to quaternary structure, homodimer.

The protein resides in the cytoplasm. It carries out the reaction tRNA(Pro) + L-proline + ATP = L-prolyl-tRNA(Pro) + AMP + diphosphate. Catalyzes the attachment of proline to tRNA(Pro) in a two-step reaction: proline is first activated by ATP to form Pro-AMP and then transferred to the acceptor end of tRNA(Pro). As ProRS can inadvertently accommodate and process non-cognate amino acids such as alanine and cysteine, to avoid such errors it has two additional distinct editing activities against alanine. One activity is designated as 'pretransfer' editing and involves the tRNA(Pro)-independent hydrolysis of activated Ala-AMP. The other activity is designated 'posttransfer' editing and involves deacylation of mischarged Ala-tRNA(Pro). The misacylated Cys-tRNA(Pro) is not edited by ProRS. This Synechococcus sp. (strain CC9902) protein is Proline--tRNA ligase.